The sequence spans 368 residues: Aminomethyltransferase (368 aa).

Belongs to the GcvT family. As to quaternary structure, the glycine cleavage system is composed of four proteins: P, T, L and H.

The enzyme catalyses N(6)-[(R)-S(8)-aminomethyldihydrolipoyl]-L-lysyl-[protein] + (6S)-5,6,7,8-tetrahydrofolate = N(6)-[(R)-dihydrolipoyl]-L-lysyl-[protein] + (6R)-5,10-methylene-5,6,7,8-tetrahydrofolate + NH4(+). Its function is as follows. The glycine cleavage system catalyzes the degradation of glycine. The protein is Aminomethyltransferase of Alkaliphilus oremlandii (strain OhILAs) (Clostridium oremlandii (strain OhILAs)).